Reading from the N-terminus, the 458-residue chain is 3-isopropylmalate dehydratase large subunit (458 aa).

[4Fe-4S] cluster-binding residues include C337, C397, and C400.

Belongs to the aconitase/IPM isomerase family. LeuC type 1 subfamily. Heterodimer of LeuC and LeuD. Requires [4Fe-4S] cluster as cofactor.

The catalysed reaction is (2R,3S)-3-isopropylmalate = (2S)-2-isopropylmalate. The protein operates within amino-acid biosynthesis; L-leucine biosynthesis; L-leucine from 3-methyl-2-oxobutanoate: step 2/4. In terms of biological role, catalyzes the isomerization between 2-isopropylmalate and 3-isopropylmalate, via the formation of 2-isopropylmaleate. In Leuconostoc mesenteroides subsp. mesenteroides (strain ATCC 8293 / DSM 20343 / BCRC 11652 / CCM 1803 / JCM 6124 / NCDO 523 / NBRC 100496 / NCIMB 8023 / NCTC 12954 / NRRL B-1118 / 37Y), this protein is 3-isopropylmalate dehydratase large subunit.